Here is a 243-residue protein sequence, read N- to C-terminus: HTH-type transcriptional regulator MlrA (243 aa).

The HTH merR-type domain occupies 3–72 (LYTIGEVALL…VSKVKVLLSS (70 aa)). Positions 6-25 (IGEVALLCDINPVTLRAWQR) form a DNA-binding region, H-T-H motif.

Functionally, transcriptional activator of csgD, which is required for production of the curli (AgF). This Salmonella typhimurium (strain SL1344) protein is HTH-type transcriptional regulator MlrA.